The chain runs to 530 residues: Phosphoenolpyruvate carboxykinase (ATP) (530 aa).

Residues R58, Y195, and K201 each coordinate substrate. Residues K201, H220, and 236–244 (GLSGTGKTT) each bind ATP. Residues K201 and H220 each coordinate Mn(2+). Position 257 (D257) interacts with Mn(2+). ATP-binding positions include E285, R321, 440–441 (RI), and T446. R321 contacts substrate.

It belongs to the phosphoenolpyruvate carboxykinase (ATP) family. Mn(2+) is required as a cofactor.

It is found in the cytoplasm. The enzyme catalyses oxaloacetate + ATP = phosphoenolpyruvate + ADP + CO2. The protein operates within carbohydrate biosynthesis; gluconeogenesis. Involved in the gluconeogenesis. Catalyzes the conversion of oxaloacetate (OAA) to phosphoenolpyruvate (PEP) through direct phosphoryl transfer between the nucleoside triphosphate and OAA. The polypeptide is Phosphoenolpyruvate carboxykinase (ATP) (Staphylococcus epidermidis (strain ATCC 12228 / FDA PCI 1200)).